Reading from the N-terminus, the 241-residue chain is Probable septum site-determining protein MinC (241 aa).

It belongs to the MinC family. As to quaternary structure, interacts with MinD and FtsZ.

Cell division inhibitor that blocks the formation of polar Z ring septums. Rapidly oscillates between the poles of the cell to destabilize FtsZ filaments that have formed before they mature into polar Z rings. Prevents FtsZ polymerization. The chain is Probable septum site-determining protein MinC from Rhizobium rhizogenes (strain K84 / ATCC BAA-868) (Agrobacterium radiobacter).